The following is a 286-amino-acid chain: ATP synthase gamma chain (286 aa).

The protein belongs to the ATPase gamma chain family. As to quaternary structure, F-type ATPases have 2 components, CF(1) - the catalytic core - and CF(0) - the membrane proton channel. CF(1) has five subunits: alpha(3), beta(3), gamma(1), delta(1), epsilon(1). CF(0) has three main subunits: a, b and c.

The protein localises to the cell inner membrane. Functionally, produces ATP from ADP in the presence of a proton gradient across the membrane. The gamma chain is believed to be important in regulating ATPase activity and the flow of protons through the CF(0) complex. The chain is ATP synthase gamma chain from Christiangramia forsetii (strain DSM 17595 / CGMCC 1.15422 / KT0803) (Gramella forsetii).